The chain runs to 181 residues: CASP-like protein 1F2 (181 aa).

Residues 1–18 (MADIETKSSQNQPLKTQN) lie on the Cytoplasmic side of the membrane. Residues 19–39 (IFIGAQIFLRIVVIAASFAST) traverse the membrane as a helical segment. Residues 40 to 70 (WLMLTNKQTIDIGGFVLDANYSYSPEFKFLS) lie on the Extracellular side of the membrane. Asn59 carries N-linked (GlcNAc...) asparagine glycosylation. A helical membrane pass occupies residues 71–91 (YANIVVGAFSFVSLLFLVLVG). Over 92–100 (RRSSNPTYY) the chain is Cytoplasmic. A helical membrane pass occupies residues 101-121 (FILFLHDLALMSLVLGGCAAA). At 122-150 (TVIGSLGKYGNSHTGWMQICDHFGKFCKR) the chain is on the extracellular side. A helical membrane pass occupies residues 151 to 171 (ATTSVAFSYFSLVCLLILTIT). At 172–181 (SASKSRQIQV) the chain is on the cytoplasmic side.

It belongs to the Casparian strip membrane proteins (CASP) family. In terms of assembly, homodimer and heterodimers.

Its subcellular location is the cell membrane. The chain is CASP-like protein 1F2 from Populus trichocarpa (Western balsam poplar).